The sequence spans 347 residues: Probable tRNA N6-adenosine threonylcarbamoyltransferase (347 aa).

A divalent metal cation contacts are provided by His-109, His-113, and Tyr-130. Residues 130 to 134, Asp-162, Gly-177, Glu-181, and Asn-277 contribute to the substrate site; that span reads YVSGG. Residue Asp-305 coordinates a divalent metal cation.

This sequence belongs to the KAE1 / TsaD family. As to quaternary structure, component of the EKC/KEOPS complex; the whole complex dimerizes. It depends on a divalent metal cation as a cofactor.

It is found in the cytoplasm. It localises to the nucleus. It carries out the reaction L-threonylcarbamoyladenylate + adenosine(37) in tRNA = N(6)-L-threonylcarbamoyladenosine(37) in tRNA + AMP + H(+). Component of the EKC/KEOPS complex that is required for the formation of a threonylcarbamoyl group on adenosine at position 37 (t(6)A37) in tRNAs that read codons beginning with adenine. The complex is probably involved in the transfer of the threonylcarbamoyl moiety of threonylcarbamoyl-AMP (TC-AMP) to the N6 group of A37. Likely plays a direct catalytic role in this reaction, but requires other protein(s) of the complex to fulfill this activity. This is Probable tRNA N6-adenosine threonylcarbamoyltransferase from Drosophila melanogaster (Fruit fly).